Reading from the N-terminus, the 358-residue chain is F-box only protein 25 (358 aa).

The interval 1 to 83 is interaction with beta-actin; sequence MPFLGQDWRS…NDTNTQSFYR (83 aa). Residues 226–274 form the F-box domain; it reads LTLSDLPLHMLNNILYRFSDGWDIITLGQVTPTLYMLSEDRQLWKKLCQ.

In terms of assembly, part of a SCF (SKP1-cullin-F-box) protein ligase complex consisting of FBXO25, SKP1, CUL1 and RBX1. Interacts directly with SKP1 and CUL1. Interacts (via C-terminus) with beta-actin (via N-terminus).

The protein resides in the nucleus. The protein operates within protein modification; protein ubiquitination. Its function is as follows. Substrate-recognition component of the SCF (SKP1-CUL1-F-box protein)-type E3 ubiquitin ligase complex. May play a role in accumulation of expanded polyglutamine (polyQ) protein huntingtin (HTT). This chain is F-box only protein 25 (FBXO25), found in Macaca fascicularis (Crab-eating macaque).